The sequence spans 605 residues: Tegument protein UL47 homolog (605 aa).

Residues Met1 to Asp75 form a disordered region. Residues Pro8–Ser17 show a composition bias toward basic residues. Positions Gly54–Lys69 are enriched in basic and acidic residues.

This sequence belongs to the alphaherpesvirinae HHV-1 UL47 family. Interacts with US3 kinase. Interacts with UL31 and UL34; these interactions seem important for efficient virion nuclear egress. Interacts with UL41/VHS. Phosphorylated by US3. This phosphorylation is required for proper nuclear localization.

It localises to the virion tegument. Its subcellular location is the host nucleus. The protein localises to the host cytoplasm. Functionally, tegument protein that can bind to various RNA transcripts. Plays a role in the attenuation of selective viral and cellular mRNA degradation by modulating the activity of host shutoff RNase UL41/VHS. Also plays a role in the primary envelopment of virions in the perinuclear space, probably by interacting with two nuclear egress proteins UL31 and UL34. This chain is Tegument protein UL47 homolog (sORF1), found in Amazona oratrix (yellow-headed parrot).